The primary structure comprises 403 residues: D-galactonate dehydratase family member RspA (403 aa).

Substrate contacts are provided by N37 and H122. The active-site Proton donor/acceptor is Y159. A Mg(2+)-binding site is contributed by D211. The active-site Proton donor/acceptor is the H213. Residues E237 and E263 each coordinate Mg(2+). The substrate site is built by E263, R284, H313, D317, and E340.

It belongs to the mandelate racemase/muconate lactonizing enzyme family. GalD subfamily. Mg(2+) is required as a cofactor.

The enzyme catalyses D-mannonate = 2-dehydro-3-deoxy-D-gluconate + H2O. It carries out the reaction D-gluconate = 2-dehydro-3-deoxy-D-gluconate + H2O. Its function is as follows. Has low dehydratase activity with D-mannonate and D-gluconate, suggesting that these are not physiological substrates and that it has no significant role in the in vivo degradation of these compounds. Has no detectable activity with a panel of 70 other acid sugars (in vitro). The protein is D-galactonate dehydratase family member RspA (rspA) of Halomonas elongata (strain ATCC 33173 / DSM 2581 / NBRC 15536 / NCIMB 2198 / 1H9).